Here is an 802-residue protein sequence, read N- to C-terminus: Neuronal PAS domain-containing protein 4 (802 aa).

A basic motif; degenerate region spans residues 1 to 13 (MYRSTKGASKARR). One can recognise a bHLH domain in the interval 1 to 53 (MYRSTKGASKARRDQINAEIRNLKELLPLAEADKVRLSYLHIMSLACIYTRKG). Residues 5 to 38 (TKGASKARRDQINAEIRNLKELLPLAEADKVRLS) are a coiled coil. Residues 14–53 (DQINAEIRNLKELLPLAEADKVRLSYLHIMSLACIYTRKG) are helix-loop-helix motif. 2 consecutive PAS domains span residues 70 to 144 (SAQE…LDTD) and 203 to 273 (PGPG…LAES). Residues 278-317 (AEMVVRLQAKTGGWAWIYCLLYSEGPEGPITANNYPISDM) enclose the PAC domain. Composition is skewed to polar residues over residues 466–476 (FSDQLTPSSAT), 506–518 (STFP…STAT), and 532–555 (TPPS…QLSP). 2 disordered regions span residues 466 to 485 (FSDQ…TSPL) and 506 to 555 (STFP…QLSP). The stretch at 624–648 (YSEKEQNEIDRLIQQISQLAQGMDR) forms a coiled coil. The tract at residues 717 to 749 (LSTPDPSEEWGSGDPEAEGPGGAPSPCNNLSPE) is disordered.

In terms of assembly, efficient DNA binding requires dimerization with another bHLH protein. Heterodimer; forms a heterodimer with ARNT, ARNT2 or BMAL1. Ubiquitinated, leading to degradation by the proteosome. In terms of tissue distribution, brain.

The protein localises to the nucleus. Functionally, transcription factor expressed in neurons of the brain that regulates the excitatory-inhibitory balance within neural circuits and is required for contextual memory in the hippocampus. Plays a key role in the structural and functional plasticity of neurons. Acts as an early-response transcription factor in both excitatory and inhibitory neurons, where it induces distinct but overlapping sets of late-response genes in these two types of neurons, allowing the synapses that form on inhibitory and excitatory neurons to be modified by neuronal activity in a manner specific to their function within a circuit, thereby facilitating appropriate circuit responses to sensory experience. In excitatory neurons, activates transcription of BDNF, which in turn controls the number of GABA-releasing synapses that form on excitatory neurons, thereby promoting an increased number of inhibitory synapses on excitatory neurons. In inhibitory neurons, regulates a distinct set of target genes that serve to increase excitatory input onto somatostatin neurons, probably resulting in enhanced feedback inhibition within cortical circuits. The excitatory and inhibitory balance in neurons affects a number of processes, such as short-term and long-term memory, acquisition of experience, fear memory, response to stress and social behavior. Acts as a regulator of dendritic spine development in olfactory bulb granule cells in a sensory-experience-dependent manner by regulating expression of MDM2. Efficient DNA binding requires dimerization with another bHLH protein, such as ARNT, ARNT2 or BMAL1. Can activate the CME (CNS midline enhancer) element. The chain is Neuronal PAS domain-containing protein 4 from Homo sapiens (Human).